The primary structure comprises 314 residues: Putative lipoprotein LppW (314 aa).

The signal sequence occupies residues 1–22 (MRARPLTLLTALAAVTLVVVAG). Cys23 is lipidated: N-palmitoyl cysteine. Residue Cys23 is the site of S-diacylglycerol cysteine attachment.

The protein resides in the cell membrane. This Mycobacterium bovis (strain ATCC BAA-935 / AF2122/97) protein is Putative lipoprotein LppW (lppW).